A 362-amino-acid chain; its full sequence is Probable dual-specificity RNA methyltransferase RlmN (362 aa).

The active-site Proton acceptor is the E105. In terms of domain architecture, Radical SAM core spans 111-344; the sequence is HEYGNSICVT…VTIRREQGHD (234 aa). An intrachain disulfide couples C118 to C349. 3 residues coordinate [4Fe-4S] cluster: C125, C129, and C132. S-adenosyl-L-methionine is bound by residues 175 to 176, S207, 230 to 232, and N306; these read GE and SLH. The active-site S-methylcysteine intermediate is the C349.

It belongs to the radical SAM superfamily. RlmN family. [4Fe-4S] cluster serves as cofactor.

Its subcellular location is the cytoplasm. It carries out the reaction adenosine(2503) in 23S rRNA + 2 reduced [2Fe-2S]-[ferredoxin] + 2 S-adenosyl-L-methionine = 2-methyladenosine(2503) in 23S rRNA + 5'-deoxyadenosine + L-methionine + 2 oxidized [2Fe-2S]-[ferredoxin] + S-adenosyl-L-homocysteine. It catalyses the reaction adenosine(37) in tRNA + 2 reduced [2Fe-2S]-[ferredoxin] + 2 S-adenosyl-L-methionine = 2-methyladenosine(37) in tRNA + 5'-deoxyadenosine + L-methionine + 2 oxidized [2Fe-2S]-[ferredoxin] + S-adenosyl-L-homocysteine. Specifically methylates position 2 of adenine 2503 in 23S rRNA and position 2 of adenine 37 in tRNAs. This Bacillus cereus (strain B4264) protein is Probable dual-specificity RNA methyltransferase RlmN.